A 594-amino-acid chain; its full sequence is Zinc finger protein 703 (594 aa).

Residues 1 to 14 (MSDSPAGSNPRTPE) show a composition bias toward polar residues. Disordered regions lie at residues 1 to 37 (MSDS…VPAV), 100 to 298 (TCSQ…GHVA), and 345 to 370 (LVGG…LTGA). Position 2 is an N-acetylserine (S2). Positions 17-30 (GSGGGSSSGGGGGK) are enriched in gly residues. Composition is skewed to low complexity over residues 134 to 145 (RSAPGAASAAAA), 177 to 191 (GSSS…SSSS), and 212 to 225 (GASV…SSPG). The span at 246–256 (ELDKKEQEAKP) shows a compositional bias: basic and acidic residues. S257 carries the phosphoserine modification. The span at 345–356 (LVGGQLSGGLGL) shows a compositional bias: gly residues. The C2H2-type zinc-finger motif lies at 460 to 488 (HSCNWVAASGPCDKRFATSEELLSHLRTH). R584 is modified (omega-N-methylarginine).

This sequence belongs to the Elbow/Noc family. In terms of assembly, interacts with DCAF7 and PHB2. Interacts with TLE4; increases transcriptional repression. Expressed in mammary epithelium.

It is found in the nucleus. The protein resides in the cytoplasm. Functionally, transcriptional corepressor which does not bind directly to DNA and may regulate transcription through recruitment of histone deacetylases to gene promoters. Regulates cell adhesion, migration and proliferation. May be required for segmental gene expression during hindbrain development. The sequence is that of Zinc finger protein 703 (Znf703) from Mus musculus (Mouse).